The chain runs to 428 residues: 3-phosphoshikimate 1-carboxyvinyltransferase (428 aa).

The 3-phosphoshikimate site is built by Lys21, Ser22, and Arg26. Lys21 lines the phosphoenolpyruvate pocket. Phosphoenolpyruvate contacts are provided by Gly91 and Arg119. Residues Ser164, Gln166, Asp313, and Lys340 each coordinate 3-phosphoshikimate. A phosphoenolpyruvate-binding site is contributed by Gln166. The Proton acceptor role is filled by Asp313. 2 residues coordinate phosphoenolpyruvate: Arg344 and Arg386.

The protein belongs to the EPSP synthase family. In terms of assembly, monomer.

The protein resides in the cytoplasm. It catalyses the reaction 3-phosphoshikimate + phosphoenolpyruvate = 5-O-(1-carboxyvinyl)-3-phosphoshikimate + phosphate. The protein operates within metabolic intermediate biosynthesis; chorismate biosynthesis; chorismate from D-erythrose 4-phosphate and phosphoenolpyruvate: step 6/7. Its function is as follows. Catalyzes the transfer of the enolpyruvyl moiety of phosphoenolpyruvate (PEP) to the 5-hydroxyl of shikimate-3-phosphate (S3P) to produce enolpyruvyl shikimate-3-phosphate and inorganic phosphate. This Campylobacter jejuni subsp. doylei (strain ATCC BAA-1458 / RM4099 / 269.97) protein is 3-phosphoshikimate 1-carboxyvinyltransferase.